The chain runs to 245 residues: tRNA pseudouridine synthase A (245 aa).

The active-site Nucleophile is Asp52. Residue Tyr110 coordinates substrate.

It belongs to the tRNA pseudouridine synthase TruA family. As to quaternary structure, homodimer.

The enzyme catalyses uridine(38/39/40) in tRNA = pseudouridine(38/39/40) in tRNA. In terms of biological role, formation of pseudouridine at positions 38, 39 and 40 in the anticodon stem and loop of transfer RNAs. This chain is tRNA pseudouridine synthase A, found in Ruminiclostridium cellulolyticum (strain ATCC 35319 / DSM 5812 / JCM 6584 / H10) (Clostridium cellulolyticum).